A 120-amino-acid chain; its full sequence is Large ribosomal subunit protein bL19 (120 aa).

It belongs to the bacterial ribosomal protein bL19 family.

This protein is located at the 30S-50S ribosomal subunit interface and may play a role in the structure and function of the aminoacyl-tRNA binding site. This is Large ribosomal subunit protein bL19 from Marinomonas sp. (strain MWYL1).